A 1247-amino-acid chain; its full sequence is Nidogen-1 (1247 aa).

A signal peptide spans 1-28; sequence MLASSSRIRAAWTRALLLPLLLAGPVGC. Positions 106–268 constitute an NIDO domain; sequence PFLADLDTTD…GVWVFEIGSP (163 aa). A sulfotyrosine mark is found at Tyr289 and Tyr296. An EGF-like 1 domain is found at 386-426; the sequence is SRQTCANNRHQCSVHAECRDYATGFCCSCVAGYTGNGRQCV. Intrachain disulfides connect Cys390–Cys403, Cys397–Cys412, Cys411–Cys618, Cys414–Cys425, Cys672–Cys685, Cys679–Cys695, Cys697–Cys708, Cys714–Cys727, Cys721–Cys736, Cys738–Cys750, Cys762–Cys777, Cys769–Cys787, Cys789–Cys800, Cys806–Cys817, Cys811–Cys826, Cys828–Cys839, Cys849–Cys878, Cys889–Cys896, and Cys898–Cys919. A Nidogen G2 beta-barrel domain is found at 430 to 667; the sequence is SPQRVNGKVK…GPVREGSPDA (238 aa). An EGF-like 2 domain is found at 668–709; that stretch reads LQNPCYIGTHGCDTNAACRPGPRTQFTCECSIGFRGDGRTCY. Residues 702–704 carry the Cell attachment site motif; it reads RGD. The EGF-like 3; calcium-binding domain maps to 710–751; that stretch reads DIDECSEQPSVCGSHTICNNHPGTFRCECVEGYQFSDEGTCV. One can recognise an EGF-like 4 domain in the interval 758-801; that stretch reads PINYCETGLHNCDIPQRAQCIYTGGSSYTCSCLPGFSGDGQACQ. The EGF-like 5; calcium-binding domain occupies 802–840; that stretch reads DVDECQPSRCHPDAFCYNTPGSFTCQCKPGYQGDGFRCV. In terms of domain architecture, Thyroglobulin type-1 spans 846 to 919; that stretch reads KTRCQHEREH…RTRPGMTPPC (74 aa). Thr922 and Thr935 each carry an O-linked (GalNAc...) threonine glycan. LDL-receptor class B repeat units lie at residues 990-1032, 1033-1075, 1076-1120, and 1121-1162; these read KMVY…DHLG, RNIF…DSVR, GNLY…DAFS, and SQLC…YGKN. An EGF-like 6 domain is found at 1208 to 1244; the sequence is GHNYCSVNNGGCTHLCLATPGSRTCRCPDNTLGVDCI. 3 disulfides stabilise this stretch: Cys1212/Cys1223, Cys1219/Cys1232, and Cys1234/Cys1243.

In terms of assembly, interacts with FBLN1. Interacts with LGALS3BP. Interacts with PLXDC1. Interacts with SVEP1. In terms of processing, N- and O-glycosylated.

The protein resides in the secreted. It is found in the extracellular space. Its subcellular location is the extracellular matrix. It localises to the basement membrane. Functionally, sulfated glycoprotein widely distributed in basement membranes and tightly associated with laminin. Also binds to collagen IV and perlecan. It probably has a role in cell-extracellular matrix interactions. The chain is Nidogen-1 (NID1) from Homo sapiens (Human).